Here is a 300-residue protein sequence, read N- to C-terminus: Taste receptor type 2 member 105 (300 aa).

The Extracellular segment spans residues 1-7; the sequence is MLSAAEG. A helical transmembrane segment spans residues 8-28; sequence ILLSIATVEAGLGVLGNTFIA. Over 29–43 the chain is Cytoplasmic; it reads LVNCMDWAKNNKLSM. Residues 44–64 traverse the membrane as a helical segment; that stretch reads TGFLLIGLATSRIFIVWLLTL. The Extracellular portion of the chain corresponds to 65-87; the sequence is DAYAKLFYPSKYFSSSLIEIISY. A helical membrane pass occupies residues 88-108; the sequence is IWMTVNHLTVWFATSLSIFYF. The Cytoplasmic portion of the chain corresponds to 109–128; sequence LKIANFSDCVFLWLKRRTDK. A helical transmembrane segment spans residues 129–149; sequence AFVFLLGCLLTSWVISFSFVV. Residues 150–181 are Extracellular-facing; it reads KVMKDGKVNHRNRTSEMYWEKRQFTINYVFLN. A glycan (N-linked (GlcNAc...) asparagine) is linked at asparagine 161. The helical transmembrane segment at 182–202 threads the bilayer; the sequence is IGVISLFMMTLTACFLLIMSL. Residues 203–233 lie on the Cytoplasmic side of the membrane; sequence WRHSRQMQSGVSGFRDLNTEAHVKAIKFLIS. The chain crosses the membrane as a helical span at residues 234–254; the sequence is FIILFVLYFIGVSIEIICIFI. The Extracellular segment spans residues 255–259; it reads PENKL. A helical transmembrane segment spans residues 260–280; the sequence is LFIFGFTTASIYPCCHSFILI. At 281–300 the chain is on the cytoplasmic side; that stretch reads LSNSQLKQAFVKVLQGLKFF.

Belongs to the G-protein coupled receptor T2R family. As to expression, expressed in subsets of taste receptor cells of the tongue and palate epithelium and exclusively in gustducin-positive cells. Expressed in gastric and duodenal tissues.

Its subcellular location is the membrane. In terms of biological role, gustducin-coupled cycloheximide receptor implicated in the perception of bitter compounds in the oral cavity and the gastrointestinal tract. Signals through PLCB2 and the calcium-regulated cation channel TRPM5. This is Taste receptor type 2 member 105 (Tas2r105) from Mus musculus (Mouse).